Consider the following 298-residue polypeptide: N-acetylmuramic acid 6-phosphate etherase (298 aa).

Residues 55–218 (IHTQVSGGGR…STGLMIKSGK (164 aa)) form the SIS domain. Glu83 functions as the Proton donor in the catalytic mechanism. The active site involves Glu114.

Belongs to the GCKR-like family. MurNAc-6-P etherase subfamily. As to quaternary structure, homodimer.

The catalysed reaction is N-acetyl-D-muramate 6-phosphate + H2O = N-acetyl-D-glucosamine 6-phosphate + (R)-lactate. Its pathway is amino-sugar metabolism; 1,6-anhydro-N-acetylmuramate degradation. It functions in the pathway amino-sugar metabolism; N-acetylmuramate degradation. It participates in cell wall biogenesis; peptidoglycan recycling. Specifically catalyzes the cleavage of the D-lactyl ether substituent of MurNAc 6-phosphate, producing GlcNAc 6-phosphate and D-lactate. Together with AnmK, is also required for the utilization of anhydro-N-acetylmuramic acid (anhMurNAc) either imported from the medium or derived from its own cell wall murein, and thus plays a role in cell wall recycling. The sequence is that of N-acetylmuramic acid 6-phosphate etherase from Escherichia coli O127:H6 (strain E2348/69 / EPEC).